Here is a 226-residue protein sequence, read N- to C-terminus: Thymidylate kinase (226 aa).

12–19 (GIDGAGKS) lines the ATP pocket.

This sequence belongs to the thymidylate kinase family.

The catalysed reaction is dTMP + ATP = dTDP + ADP. In terms of biological role, phosphorylation of dTMP to form dTDP in both de novo and salvage pathways of dTTP synthesis. This chain is Thymidylate kinase, found in Verminephrobacter eiseniae (strain EF01-2).